The chain runs to 227 residues: Ribose-5-phosphate isomerase A (227 aa).

Residues 26-29 (TGST), 82-85 (DGAD), and 95-98 (KGGG) each bind substrate. Residue E104 is the Proton acceptor of the active site. Position 122 (K122) interacts with substrate.

It belongs to the ribose 5-phosphate isomerase family. As to quaternary structure, homodimer.

The catalysed reaction is aldehydo-D-ribose 5-phosphate = D-ribulose 5-phosphate. Its pathway is carbohydrate degradation; pentose phosphate pathway; D-ribose 5-phosphate from D-ribulose 5-phosphate (non-oxidative stage): step 1/1. Catalyzes the reversible conversion of ribose-5-phosphate to ribulose 5-phosphate. The protein is Ribose-5-phosphate isomerase A of Streptococcus equi subsp. zooepidemicus (strain H70).